A 562-amino-acid chain; its full sequence is Cytosolic Fe-S cluster assembly factor nar1 (562 aa).

Residue cysteine 20 participates in [4Fe-4S] cluster binding. A disordered region spans residues 28-47 (PKNESSNSQNPYEVTTEDKV). A compositionally biased stretch (polar residues) spans 29–40 (KNESSNSQNPYE). The [4Fe-4S] cluster site is built by cysteine 62, cysteine 65, cysteine 68, cysteine 214, and cysteine 269. The tract at residues 439-462 (ARVPAASAGGNRRQPISRNSASAG) is disordered. Over residues 452-462 (QPISRNSASAG) the composition is skewed to polar residues. Residues cysteine 475 and cysteine 479 each coordinate [4Fe-4S] cluster. Disordered regions lie at residues 492–513 (REAS…PTPH) and 541–562 (HSPS…IGLT). Positions 494–505 (ASTSTQSVTAVE) are enriched in polar residues.

The protein belongs to the NARF family.

In terms of biological role, component of the cytosolic Fe/S protein assembly machinery. Required for maturation of extramitochondrial Fe/S proteins. May play a role in the transfer of pre-assembled Fe/S clusters to target apoproteins. This is Cytosolic Fe-S cluster assembly factor nar1 (nar1) from Aspergillus flavus (strain ATCC 200026 / FGSC A1120 / IAM 13836 / NRRL 3357 / JCM 12722 / SRRC 167).